Consider the following 298-residue polypeptide: MTEQAISFAKDFLAGGIAAAISKTAVAPIERVKLLLQVQHASKQIAADKQYKGIVDCIVRIPKEQGVLSFWRGNLANVIRYFPTQALNFAFKDKYKQIFLGGVDKRTQFWRYFAGNLASGGAAGATSLCFVYPLDFARTRLAADVGKSGSEREFRGLGDCLVKITKSDGIRGLYQGFNVSVQGIIIYRAAYFGIYDTAKGMLPDPKNTHIVVSWMIAQTVTAVAGVVSYPFDTVRRRMMMQSGRKGADIMYKGTVDCWRKILKDEGGKAFFKGAWSNVLRGMGGAFVLVLYDELKKVI.

The residue at position 1 (Met-1) is an N-acetylmethionine. The Mitochondrial intermembrane segment spans residues 1 to 7 (MTEQAIS). The residue at position 2 (Thr-2) is an N-acetylthreonine; in ADP/ATP translocase 3, N-terminally processed. One copy of the Solcar 1 repeat lies at 6 to 98 (ISFAKDFLAG…FAFKDKYKQI (93 aa)). Residues 8–37 (FAKDFLAGGIAAAISKTAVAPIERVKLLLQ) traverse the membrane as a helical segment. At 38 to 74 (VQHASKQIAADKQYKGIVDCIVRIPKEQGVLSFWRGN) the chain is on the mitochondrial matrix side. The residue at position 52 (Lys-52) is an N6,N6,N6-trimethyllysine. A helical membrane pass occupies residues 75–99 (LANVIRYFPTQALNFAFKDKYKQIF). ADP contacts are provided by Arg-80 and Lys-92. Topologically, residues 100–109 (LGGVDKRTQF) are mitochondrial intermembrane. N6-acetyllysine is present on Lys-105. The chain crosses the membrane as a helical span at residues 110-130 (WRYFAGNLASGGAAGATSLCF). Solcar repeat units follow at residues 111 to 201 (RYFA…AKGM) and 212 to 297 (VSWM…LKKV). Topologically, residues 131–178 (VYPLDFARTRLAADVGKSGSEREFRGLGDCLVKITKSDGIRGLYQGFN) are mitochondrial matrix. Residues 179-199 (VSVQGIIIYRAAYFGIYDTAK) form a helical membrane-spanning segment. Topologically, residues 200 to 210 (GMLPDPKNTHI) are mitochondrial intermembrane. The chain crosses the membrane as a helical span at residues 211-231 (VVSWMIAQTVTAVAGVVSYPF). At 232–273 (DTVRRRMMMQSGRKGADIMYKGTVDCWRKILKDEGGKAFFKG) the chain is on the mitochondrial matrix side. An ADP-binding site is contributed by Arg-235. Positions 235–240 (RRRMMM) are important for transport activity. Residues 235 to 240 (RRRMMM) carry the Nucleotide carrier signature motif motif. Position 268 is an N6-acetyllysine (Lys-268). The helical transmembrane segment at 274-291 (AWSNVLRGMGGAFVLVLY) threads the bilayer. Over 292 to 298 (DELKKVI) the chain is Mitochondrial intermembrane.

Belongs to the mitochondrial carrier (TC 2.A.29) family. As to quaternary structure, monomer. Found in a complex with ARL2, ARL2BP and SLC25A6/ANT3. In terms of processing, trimethylated by ANTKMT at Lys-52.

The protein resides in the mitochondrion inner membrane. Its subcellular location is the membrane. It catalyses the reaction ADP(in) + ATP(out) = ADP(out) + ATP(in). The enzyme catalyses H(+)(in) = H(+)(out). The matrix-open state (m-state) is inhibited by the membrane-permeable bongkrekic acid (BKA). The cytoplasmic-open state (c-state) is inhibited by the membrane-impermeable toxic inhibitor carboxyatractyloside (CATR). Proton transporter activity is inhibited by ADP:ATP antiporter activity. In terms of biological role, ADP:ATP antiporter that mediates import of ADP into the mitochondrial matrix for ATP synthesis, and export of ATP out to fuel the cell. Cycles between the cytoplasmic-open state (c-state) and the matrix-open state (m-state): operates by the alternating access mechanism with a single substrate-binding site intermittently exposed to either the cytosolic (c-state) or matrix (m-state) side of the inner mitochondrial membrane. In addition to its ADP:ATP antiporter activity, also involved in mitochondrial uncoupling and mitochondrial permeability transition pore (mPTP) activity. Plays a role in mitochondrial uncoupling by acting as a proton transporter: proton transport uncouples the proton flows via the electron transport chain and ATP synthase to reduce the efficiency of ATP production and cause mitochondrial thermogenesis. Proton transporter activity is inhibited by ADP:ATP antiporter activity, suggesting that SLC25A6/ANT3 acts as a master regulator of mitochondrial energy output by maintaining a delicate balance between ATP production (ADP:ATP antiporter activity) and thermogenesis (proton transporter activity). Proton transporter activity requires free fatty acids as cofactor, but does not transport it. Also plays a key role in mPTP opening, a non-specific pore that enables free passage of the mitochondrial membranes to solutes of up to 1.5 kDa, and which contributes to cell death. It is however unclear if SLC25A6/ANT3 constitutes a pore-forming component of mPTP or regulates it. The sequence is that of ADP/ATP translocase 3 from Bos taurus (Bovine).